A 115-amino-acid chain; its full sequence is Large ribosomal subunit protein uL18 (115 aa).

The protein belongs to the universal ribosomal protein uL18 family. In terms of assembly, part of the 50S ribosomal subunit; part of the 5S rRNA/L5/L18/L25 subcomplex. Contacts the 5S and 23S rRNAs.

In terms of biological role, this is one of the proteins that bind and probably mediate the attachment of the 5S RNA into the large ribosomal subunit, where it forms part of the central protuberance. The polypeptide is Large ribosomal subunit protein uL18 (Vesicomyosocius okutanii subsp. Calyptogena okutanii (strain HA)).